Here is a 186-residue protein sequence, read N- to C-terminus: Peptide deformylase (186 aa).

Fe cation-binding residues include Cys113 and His156. Residue Glu157 is part of the active site. Residue His160 participates in Fe cation binding.

This sequence belongs to the polypeptide deformylase family. Fe(2+) is required as a cofactor.

The catalysed reaction is N-terminal N-formyl-L-methionyl-[peptide] + H2O = N-terminal L-methionyl-[peptide] + formate. Functionally, removes the formyl group from the N-terminal Met of newly synthesized proteins. Requires at least a dipeptide for an efficient rate of reaction. N-terminal L-methionine is a prerequisite for activity but the enzyme has broad specificity at other positions. In Ligilactobacillus salivarius (strain UCC118) (Lactobacillus salivarius), this protein is Peptide deformylase.